Consider the following 304-residue polypeptide: GDP-6-deoxy-D-mannose reductase (304 aa).

Residues phenylalanine 13–valine 14 and aspartate 39–leucine 40 each bind NADP(+). A substrate-binding site is contributed by serine 105–glycine 106. Tyrosine 131 lines the NADP(+) pocket. Residues asparagine 160, arginine 200, and arginine 260 to glutamate 263 each bind substrate.

The protein belongs to the NAD(P)-dependent epimerase/dehydratase family. GDP-6-deoxy-D-mannose reductase subfamily.

It catalyses the reaction GDP-alpha-D-rhamnose + NAD(+) = GDP-4-dehydro-alpha-D-rhamnose + NADH + H(+). It carries out the reaction GDP-alpha-D-rhamnose + NADP(+) = GDP-4-dehydro-alpha-D-rhamnose + NADPH + H(+). Reductase that catalyzes the conversion of GDP-6-deoxy-D-mannose to GDP-4-dehydro-6-deoxy-D-mannose (GDP-D-rhamnose). In Pseudomonas aeruginosa (strain ATCC 15692 / DSM 22644 / CIP 104116 / JCM 14847 / LMG 12228 / 1C / PRS 101 / PAO1), this protein is GDP-6-deoxy-D-mannose reductase (rmd).